The following is a 266-amino-acid chain: Putative carbamate hydrolase RutD (266 aa).

The protein belongs to the AB hydrolase superfamily. Hydrolase RutD family.

It catalyses the reaction carbamate + 2 H(+) = NH4(+) + CO2. In terms of biological role, involved in pyrimidine catabolism. May facilitate the hydrolysis of carbamate, a reaction that can also occur spontaneously. The chain is Putative carbamate hydrolase RutD from Enterobacter cloacae subsp. cloacae (strain ATCC 13047 / DSM 30054 / NBRC 13535 / NCTC 10005 / WDCM 00083 / NCDC 279-56).